Here is a 265-residue protein sequence, read N- to C-terminus: Phosphonoacetaldehyde hydrolase (265 aa).

The active-site Nucleophile is D9. Mg(2+) contacts are provided by D9 and A11. The Schiff-base intermediate with substrate role is filled by K50. D184 is a Mg(2+) binding site.

It belongs to the HAD-like hydrolase superfamily. PhnX family. In terms of assembly, homodimer. The cofactor is Mg(2+).

The enzyme catalyses phosphonoacetaldehyde + H2O = acetaldehyde + phosphate + H(+). In terms of biological role, involved in phosphonate degradation. This Lactiplantibacillus plantarum (strain ATCC BAA-793 / NCIMB 8826 / WCFS1) (Lactobacillus plantarum) protein is Phosphonoacetaldehyde hydrolase.